Consider the following 421-residue polypeptide: Serine hydroxymethyltransferase (421 aa).

Residues Leu121 and 125-127 (GHL) each bind (6S)-5,6,7,8-tetrahydrofolate. The residue at position 230 (Lys230) is an N6-(pyridoxal phosphate)lysine.

The protein belongs to the SHMT family. As to quaternary structure, homodimer. The cofactor is pyridoxal 5'-phosphate.

It localises to the cytoplasm. The catalysed reaction is (6R)-5,10-methylene-5,6,7,8-tetrahydrofolate + glycine + H2O = (6S)-5,6,7,8-tetrahydrofolate + L-serine. Its pathway is one-carbon metabolism; tetrahydrofolate interconversion. The protein operates within amino-acid biosynthesis; glycine biosynthesis; glycine from L-serine: step 1/1. Its function is as follows. Catalyzes the reversible interconversion of serine and glycine with tetrahydrofolate (THF) serving as the one-carbon carrier. This reaction serves as the major source of one-carbon groups required for the biosynthesis of purines, thymidylate, methionine, and other important biomolecules. Also exhibits THF-independent aldolase activity toward beta-hydroxyamino acids, producing glycine and aldehydes, via a retro-aldol mechanism. This Carboxydothermus hydrogenoformans (strain ATCC BAA-161 / DSM 6008 / Z-2901) protein is Serine hydroxymethyltransferase.